Here is a 438-residue protein sequence, read N- to C-terminus: METPPIVIDNGSYEIKFGPSTNKKPFRALNALAKDKFGTSYLSNHIKNIKDISSITFRRPHELGQLTLWELESCIWDYCLFNPSEFDGFDLKEGKGHHLVASESCMTLPELSKHADQVIFEEYEFDSLFKSPVAVFVPFTKSYKGEMRTISGKDEDIDIVRGNSDSTNSTSSESKNAQDSGSDYHDFQLVIDSGFNCTWIIPVLKGIPYYKAVKKLDIGGRFLTGLLKETLSFRHYNMMDETILVNNIKEQCLFVSPVSYFDSFKTKDKHALEYVLPDFQTSFLGYVRNPRKENVPLPEDAQIITLTDELFTIPETFFHPEISQITKPGIVEAILESLSMLPEIVRPLMVGNIVCTGGNFNLPNFAQRLAAELQRQLPTDWTCHVSVPEGDCALFGWEVMSQFAKTDSYRKARVTREEYYEHGPDWCTKHRFGYQNWI.

A disordered region spans residues 158 to 181; it reads DIVRGNSDSTNSTSSESKNAQDSG. The segment covering 163–174 has biased composition (low complexity); the sequence is NSDSTNSTSSES.

Belongs to the actin family. ARP6 subfamily. In terms of assembly, component of the SWR1 chromatin remodeling complex composed of at least ACT1, ARP4, RVB1, RVB2, ARP6, YAF9, VPS71, VPS72, SWC3, SWC4, SWC5, SWC7 and SWR1, and perhaps BDF1.

It localises to the cytoplasm. It is found in the nucleus. Component of the SWR1 complex which mediates the ATP-dependent exchange of histone H2A for the H2A variant HZT1 leading to transcriptional regulation of selected genes by chromatin remodeling. Involved in chromosome stability. The chain is Actin-like protein ARP6 (ARP6) from Saccharomyces cerevisiae (strain ATCC 204508 / S288c) (Baker's yeast).